The sequence spans 453 residues: Bifunctional protein GlmU (453 aa).

Residues M1–K225 form a pyrophosphorylase region. UDP-N-acetyl-alpha-D-glucosamine is bound by residues L6 to G9, K20, Q71, G76 to T77, Y98 to D100, G135, E150, N165, and N223. Residue D100 participates in Mg(2+) binding. Residue N223 participates in Mg(2+) binding. A linker region spans residues A226–D246. An N-acetyltransferase region spans residues G247 to S453. R329 and K347 together coordinate UDP-N-acetyl-alpha-D-glucosamine. H359 functions as the Proton acceptor in the catalytic mechanism. UDP-N-acetyl-alpha-D-glucosamine-binding residues include Y362 and N373. Residues A376, N382–Y383, S401, and A419 contribute to the acetyl-CoA site.

The protein in the N-terminal section; belongs to the N-acetylglucosamine-1-phosphate uridyltransferase family. In the C-terminal section; belongs to the transferase hexapeptide repeat family. In terms of assembly, homotrimer. Mg(2+) serves as cofactor.

The protein resides in the cytoplasm. It catalyses the reaction alpha-D-glucosamine 1-phosphate + acetyl-CoA = N-acetyl-alpha-D-glucosamine 1-phosphate + CoA + H(+). It carries out the reaction N-acetyl-alpha-D-glucosamine 1-phosphate + UTP + H(+) = UDP-N-acetyl-alpha-D-glucosamine + diphosphate. It functions in the pathway nucleotide-sugar biosynthesis; UDP-N-acetyl-alpha-D-glucosamine biosynthesis; N-acetyl-alpha-D-glucosamine 1-phosphate from alpha-D-glucosamine 6-phosphate (route II): step 2/2. The protein operates within nucleotide-sugar biosynthesis; UDP-N-acetyl-alpha-D-glucosamine biosynthesis; UDP-N-acetyl-alpha-D-glucosamine from N-acetyl-alpha-D-glucosamine 1-phosphate: step 1/1. Its pathway is bacterial outer membrane biogenesis; LPS lipid A biosynthesis. In terms of biological role, catalyzes the last two sequential reactions in the de novo biosynthetic pathway for UDP-N-acetylglucosamine (UDP-GlcNAc). The C-terminal domain catalyzes the transfer of acetyl group from acetyl coenzyme A to glucosamine-1-phosphate (GlcN-1-P) to produce N-acetylglucosamine-1-phosphate (GlcNAc-1-P), which is converted into UDP-GlcNAc by the transfer of uridine 5-monophosphate (from uridine 5-triphosphate), a reaction catalyzed by the N-terminal domain. This chain is Bifunctional protein GlmU, found in Burkholderia lata (strain ATCC 17760 / DSM 23089 / LMG 22485 / NCIMB 9086 / R18194 / 383).